Here is a 316-residue protein sequence, read N- to C-terminus: Large ribosomal subunit protein uL10 (316 aa).

A disordered region spans residues 289-316 (AAAAAPAKEAPKEESEESDEDMGFGLFD).

Belongs to the universal ribosomal protein uL10 family. In terms of assembly, P0 forms a pentameric complex by interaction with dimers of P1 and P2. Post-translationally, phosphorylated.

It is found in the nucleus. It localises to the cytoplasm. Its function is as follows. Ribosomal protein P0 is the functional equivalent of E.coli protein L10. The polypeptide is Large ribosomal subunit protein uL10 (RPLP0) (Gallus gallus (Chicken)).